The chain runs to 325 residues: Polyprenyl transferase mpaA (325 aa).

A run of 3 helical transmembrane segments spans residues 27–47, 56–76, and 108–128; these read MPYYTMMAAVWSTLIAGALKL, VEYILFKAGLCFVHCLLLCGA, and VEALVWMVGQYFLSVKMLDLI. An N-linked (GlcNAc...) asparagine glycan is attached at Asn-131. The next 6 membrane-spanning stretches (helical) occupy residues 134–151, 159–179, 192–212, 240–260, 262–282, and 295–315; these read IWGLMLPLTASIMLYPYL, VFIYPQYILGLAVAYPSITGW, IFTHCTPICLLIFFWCLYFNT, LFLAFLGALPLAVIPYVVLKI, SPWLWFSWMAVWTVSIVMQIV, and IHWDNFLLGLWTTVACIVEVG.

It belongs to the UbiA prenyltransferase family. It depends on Mg(2+) as a cofactor.

The protein resides in the golgi apparatus membrane. The catalysed reaction is 5,7-dihydroxy-4-methylphthalide + (2E,6E)-farnesyl diphosphate = 4-farnesyl-3,5-dihydroxy-6-methylphthalide + diphosphate. Its pathway is secondary metabolite biosynthesis; terpenoid biosynthesis. Polyprenyl transferase; part of the gene cluster that mediates the biosynthesis of mycophenolic acid (MPA), the first isolated antibiotic natural product in the world obtained from a culture of Penicillium brevicompactum in 1893. MpaA is a Golgi apparatus-associated enzyme that catalyzes the prenylation of 5,7-dihydroxy-4,6-dimethylphthalide (DHMP) to yield farnesyl-DHMP (FDHMP). The first step of the pathway is the synthesis of 5-methylorsellinic acid (5MOA) by the cytosolic polyketide synthase mpaC. 5MOA is then converted to the phthalide compound 5,7-dihydroxy-4,6-dimethylphthalide (DHMP) by the endoplasmic reticulum-bound cytochrome P450 monooxygenase mpaDE. MpaDE first catalyzes hydroxylation of 5-MOA to 4,6-dihydroxy-2-(hydroxymethyl)-3-methylbenzoic acid (DHMB). MpaDE then acts as a lactone synthase that catalyzes the ring closure to convert DHMB into DHMP. The next step is the prenylation of DHMP by the Golgi apparatus-associated prenyltransferase mpaA to yield farnesyl-DHMP (FDHMP). The ER-bound oxygenase mpaB then mediates the oxidative cleavage the C19-C20 double bond in FDHMP to yield FDHMP-3C via a mycophenolic aldehyde intermediate. The O-methyltransferase mpaG catalyzes the methylation of FDHMP-3C to yield MFDHMP-3C. After the cytosolic methylation of FDHMP-3C, MFDHMP-3C enters into peroxisomes probably via free diffusion due to its low molecular weight. Upon a peroxisomal CoA ligation reaction, catalyzed by a beta-oxidation component enzyme acyl-CoA ligase ACL891, MFDHMP-3C-CoA would then be restricted to peroxisomes for the following beta-oxidation pathway steps. The peroxisomal beta-oxidation machinery than converts MFDHMP-3C-CoA into MPA_CoA, via a beta-oxidation chain-shortening process. Finally mpaH acts as a peroxisomal acyl-CoA hydrolase with high substrate specificity toward MPA-CoA to release the final product MPA. In Penicillium roqueforti (strain FM164), this protein is Polyprenyl transferase mpaA.